The following is a 158-amino-acid chain: MRIGHGFDVHKFGGEGPVIIGGVSVPYEQGLIAHSDGDVALHALCDALLGAIAEGDIGRHFPDTDDKWKGADSRALLRDVYRRVKEKGFALGNADVTIIAQAPKMAPYIQAMCNAIAEDLETELDNVNVKATTSERLGFTGRKEGIACEAVVLLVKAS.

A divalent metal cation-binding residues include D8 and H10. Residues 8–10 (DVH) and 34–35 (HS) contribute to the 4-CDP-2-C-methyl-D-erythritol 2-phosphate site. An a divalent metal cation-binding site is contributed by H42. Residues 56 to 58 (DIG), 61 to 65 (FPDTD), 100 to 106 (AQAPKMA), 132 to 135 (TTSE), F139, and R142 each bind 4-CDP-2-C-methyl-D-erythritol 2-phosphate.

It belongs to the IspF family. In terms of assembly, homotrimer. Requires a divalent metal cation as cofactor.

The enzyme catalyses 4-CDP-2-C-methyl-D-erythritol 2-phosphate = 2-C-methyl-D-erythritol 2,4-cyclic diphosphate + CMP. It functions in the pathway isoprenoid biosynthesis; isopentenyl diphosphate biosynthesis via DXP pathway; isopentenyl diphosphate from 1-deoxy-D-xylulose 5-phosphate: step 4/6. Involved in the biosynthesis of isopentenyl diphosphate (IPP) and dimethylallyl diphosphate (DMAPP), two major building blocks of isoprenoid compounds. Catalyzes the conversion of 4-diphosphocytidyl-2-C-methyl-D-erythritol 2-phosphate (CDP-ME2P) to 2-C-methyl-D-erythritol 2,4-cyclodiphosphate (ME-CPP) with a corresponding release of cytidine 5-monophosphate (CMP). The sequence is that of 2-C-methyl-D-erythritol 2,4-cyclodiphosphate synthase from Aliivibrio fischeri (strain ATCC 700601 / ES114) (Vibrio fischeri).